Consider the following 841-residue polypeptide: Translation initiation factor IF-2 (841 aa).

The interval 94–258 is disordered; that stretch reads QRSPEEIEAE…HGFQSPTGPV (165 aa). Positions 96–136 are enriched in basic and acidic residues; sequence SPEEIEAERKRELEERRAVENAARQKAEEEAKRRAEEEARR. A compositionally biased stretch (low complexity) spans 137–173; sequence QPAAAQPAGTEAVAAPVAPVEAVREAAPVAAAPAPAA. Composition is skewed to basic and acidic residues over residues 174 to 194, 200 to 217, and 225 to 234; these read DARKRDEPRRPDKPRADDNNR, DGERKNAPHRASVKEKAP, and TTDEESDGFR. The span at 235-248 shows a compositional bias: basic residues; the sequence is RGGRGKAKLKKRNA. Residues 341–510 enclose the tr-type G domain; sequence SRAPVVTVMG…LLQAEVLELK (170 aa). Residues 350–357 form a G1 region; the sequence is GHVDHGKT. Residue 350–357 participates in GTP binding; sequence GHVDHGKT. A G2 region spans residues 375 to 379; it reads GITQH. The segment at 396 to 399 is G3; the sequence is DTPG. Residues 396–400 and 450–453 each bind GTP; these read DTPGH and NKID. Residues 450-453 are G4; the sequence is NKID. The tract at residues 486–488 is G5; sequence SAK.

This sequence belongs to the TRAFAC class translation factor GTPase superfamily. Classic translation factor GTPase family. IF-2 subfamily.

It is found in the cytoplasm. In terms of biological role, one of the essential components for the initiation of protein synthesis. Protects formylmethionyl-tRNA from spontaneous hydrolysis and promotes its binding to the 30S ribosomal subunits. Also involved in the hydrolysis of GTP during the formation of the 70S ribosomal complex. This Pseudomonas fluorescens (strain SBW25) protein is Translation initiation factor IF-2.